Here is a 101-residue protein sequence, read N- to C-terminus: NADH-quinone oxidoreductase subunit K (101 aa).

Helical transmembrane passes span 4-24, 30-50, and 61-81; these read LTHY…GIFM, LVLL…FIAF, and IFVF…LAIM.

This sequence belongs to the complex I subunit 4L family. NDH-1 is composed of 14 different subunits. Subunits NuoA, H, J, K, L, M, N constitute the membrane sector of the complex.

The protein resides in the cell inner membrane. The catalysed reaction is a quinone + NADH + 5 H(+)(in) = a quinol + NAD(+) + 4 H(+)(out). Functionally, NDH-1 shuttles electrons from NADH, via FMN and iron-sulfur (Fe-S) centers, to quinones in the respiratory chain. The immediate electron acceptor for the enzyme in this species is believed to be ubiquinone. Couples the redox reaction to proton translocation (for every two electrons transferred, four hydrogen ions are translocated across the cytoplasmic membrane), and thus conserves the redox energy in a proton gradient. This Neisseria meningitidis serogroup B (strain ATCC BAA-335 / MC58) protein is NADH-quinone oxidoreductase subunit K.